Here is a 917-residue protein sequence, read N- to C-terminus: Gamma-tubulin complex component 3 (917 aa).

It belongs to the TUBGCP family. As to quaternary structure, gamma-tubulin small complex (Gamma TuSC) is a heterotetrameric complex which contains two molecules of gamma-tubulin, and one molecule each of Dgrip84 and Dgrip91. The gamma-tubulin in this complex binds preferentially to GDP over GTP.

The protein resides in the cytoplasm. It is found in the cytoskeleton. It localises to the microtubule organizing center. The protein localises to the centrosome. Its subcellular location is the perinuclear region. The chain is Gamma-tubulin complex component 3 from Drosophila melanogaster (Fruit fly).